Here is a 527-residue protein sequence, read N- to C-terminus: Catalase (527 aa).

An N-acetylalanine modification is found at Ala-2. At Ser-9 the chain carries Phosphoserine. Residues His-75 and Asn-148 contribute to the active site. Residues His-194, Ser-201, Arg-203, and Asn-213 each contribute to the NADP(+) site. Lys-221 bears the N6-succinyllysine mark. At Lys-233 the chain carries N6-acetyllysine. Positions 237, 303, 305, and 306 each coordinate NADP(+). The residue at position 306 (Lys-306) is an N6-acetyllysine; alternate. At Lys-306 the chain carries N6-succinyllysine; alternate. Tyr-358 lines the heme pocket. 2 positions are modified to phosphoserine: Ser-417 and Ser-422. Position 480 is an N6-acetyllysine; alternate (Lys-480). At Lys-480 the chain carries N6-succinyllysine; alternate. Lys-499 is subject to N6-acetyllysine. The residue at position 511 (Thr-511) is a Phosphothreonine. A phosphoserine mark is found at Ser-515 and Ser-517. The Microbody targeting signal; atypical motif lies at 524-527 (KANL).

This sequence belongs to the catalase family. As to quaternary structure, homotetramer. Interacts (via microbody targeting signal) with PEX5, monomeric form interacts with PEX5, leading to its translocation into peroxisomes. The cofactor is heme. Requires NADP(+) as cofactor.

The protein resides in the peroxisome matrix. The catalysed reaction is 2 H2O2 = O2 + 2 H2O. In terms of biological role, catalyzes the degradation of hydrogen peroxide (H(2)O(2)) generated by peroxisomal oxidases to water and oxygen, thereby protecting cells from the toxic effects of hydrogen peroxide. Promotes growth of cells including T-cells, B-cells, myeloid leukemia cells, melanoma cells, mastocytoma cells and normal and transformed fibroblast cells. The sequence is that of Catalase (CAT) from Homo sapiens (Human).